The sequence spans 233 residues: 5'-methylthioadenosine/S-adenosylhomocysteine nucleosidase (233 aa).

The active-site Proton acceptor is E12. Residues G78, I152, and 173–174 each bind substrate; that span reads ME. D197 functions as the Proton donor in the catalytic mechanism.

This sequence belongs to the PNP/UDP phosphorylase family. MtnN subfamily. As to quaternary structure, homodimer.

It catalyses the reaction S-adenosyl-L-homocysteine + H2O = S-(5-deoxy-D-ribos-5-yl)-L-homocysteine + adenine. The catalysed reaction is S-methyl-5'-thioadenosine + H2O = 5-(methylsulfanyl)-D-ribose + adenine. The enzyme catalyses 5'-deoxyadenosine + H2O = 5-deoxy-D-ribose + adenine. It functions in the pathway amino-acid biosynthesis; L-methionine biosynthesis via salvage pathway; S-methyl-5-thio-alpha-D-ribose 1-phosphate from S-methyl-5'-thioadenosine (hydrolase route): step 1/2. Functionally, catalyzes the irreversible cleavage of the glycosidic bond in both 5'-methylthioadenosine (MTA) and S-adenosylhomocysteine (SAH/AdoHcy) to adenine and the corresponding thioribose, 5'-methylthioribose and S-ribosylhomocysteine, respectively. Also cleaves 5'-deoxyadenosine, a toxic by-product of radical S-adenosylmethionine (SAM) enzymes, into 5-deoxyribose and adenine. Thus, is required for in vivo function of the radical SAM enzymes biotin synthase and lipoic acid synthase, that are inhibited by 5'-deoxyadenosine accumulation. The protein is 5'-methylthioadenosine/S-adenosylhomocysteine nucleosidase of Yersinia pestis bv. Antiqua (strain Antiqua).